A 131-amino-acid chain; its full sequence is Profilin-2 (131 aa).

The protein belongs to the profilin family. Occurs in many kinds of cells as a complex with monomeric actin in a 1:1 ratio. As to expression, expressed in vascular bundles of roots, hypocotyls, cotyledons, leaves, sepals, petals, stamen filaments and stalks of developing seeds. Expressed in leaf epidermal cells, trichomes and stem epidermal cells. Detected in phloem exudates (at protein level).

Its subcellular location is the cytoplasm. It is found in the cytoskeleton. It localises to the endoplasmic reticulum. The protein localises to the cytosol. The protein resides in the nucleus. Its function is as follows. Binds to actin monomers and regulates the organization of the actin cytoskeleton. At high concentrations, profilin prevents the polymerization of actin, whereas it enhances it at low concentrations. At low concentrations, associates with the poly-proline motif of formins to enhance actin filament elongation rate. Binds G-actin and poly-L-proline with low affinity in vitro. Binds ACT1, ACT7 and ACT11 and inhibits actin polymerization. May be involved in the cross-talk between vesicular trafficking and the actin cytoskeleton. Inhibits cell growth of various pathogenic fungal strains. May play a role as antifungal proteins in the defense system against fungal pathogen attacks. In Arabidopsis thaliana (Mouse-ear cress), this protein is Profilin-2.